The primary structure comprises 118 residues: Hydrogenase maturation factor HypA (118 aa).

Histidine 2 contributes to the Ni(2+) binding site. 4 residues coordinate Zn(2+): cysteine 73, cysteine 76, cysteine 90, and cysteine 93.

Belongs to the HypA/HybF family.

Involved in the maturation of [NiFe] hydrogenases. Required for nickel insertion into the metal center of the hydrogenase. The protein is Hydrogenase maturation factor HypA of Salmonella typhi.